A 101-amino-acid chain; its full sequence is Small ribosomal subunit protein uS14 (101 aa).

The protein belongs to the universal ribosomal protein uS14 family. Part of the 30S ribosomal subunit. Contacts proteins S3 and S10.

Binds 16S rRNA, required for the assembly of 30S particles and may also be responsible for determining the conformation of the 16S rRNA at the A site. The polypeptide is Small ribosomal subunit protein uS14 (Blochmanniella floridana).